The following is a 338-amino-acid chain: Malate dehydrogenase, mitochondrial (338 aa).

A mitochondrion-targeting transit peptide spans 1-24; that stretch reads MLSALARPVGAALRRSFSTSAQNN. Residues 31-37 and Asp-57 contribute to the NAD(+) site; that span reads GASGGIG. Ser-33 carries O-linked (GlcNAc) serine glycosylation. N6-acetyllysine; alternate is present on residues Lys-78 and Lys-91. N6-succinyllysine; alternate occurs at positions 78 and 91. Residues Arg-104 and Arg-110 each coordinate substrate. NAD(+)-binding positions include Asn-117 and 140-142; that span reads ISN. Residue Asn-142 participates in substrate binding. Residue Lys-165 is modified to N6-acetyllysine. Arg-176 is a substrate binding site. Lys-185 carries the post-translational modification N6-acetyllysine; alternate. Lys-185 is modified (N6-succinyllysine; alternate). His-200 functions as the Proton acceptor in the catalytic mechanism. Lys-203 is subject to N6-succinyllysine. Residues Lys-215 and Lys-239 each carry the N6-acetyllysine; alternate modification. N6-succinyllysine; alternate occurs at positions 215 and 239. Lys-239 bears the N6-malonyllysine; alternate mark. Ser-246 is modified (phosphoserine). Position 251 (Met-251) interacts with NAD(+). N6-succinyllysine is present on Lys-269. An N6-acetyllysine; alternate mark is found at Lys-296, Lys-301, Lys-307, Lys-314, and Lys-324. Lys-296, Lys-301, Lys-307, Lys-314, and Lys-324 each carry N6-succinyllysine; alternate. Lys-307 carries the N6-malonyllysine; alternate modification. Phosphoserine is present on Ser-326. N6-acetyllysine; alternate occurs at positions 328, 329, and 335. At Lys-328 the chain carries N6-succinyllysine; alternate. Lys-329 is modified (N6-malonyllysine; alternate). The residue at position 335 (Lys-335) is an N6-succinyllysine; alternate.

This sequence belongs to the LDH/MDH superfamily. MDH type 1 family. Homodimer. Post-translationally, acetylation is enhanced after treatment either with trichostin A (TCA) or with nicotinamide (NAM) with the appearance of tri- and tetraacetylations. Glucose also increases acetylation. As to expression, expressed in flagella of epididymal sperm.

The protein resides in the mitochondrion matrix. The catalysed reaction is (S)-malate + NAD(+) = oxaloacetate + NADH + H(+). Enzyme activity is enhanced by acetylation. The chain is Malate dehydrogenase, mitochondrial (Mdh2) from Rattus norvegicus (Rat).